The chain runs to 248 residues: Adenosylcobinamide-GDP ribazoletransferase (248 aa).

6 helical membrane passes run 36 to 56 (FFLP…YLAL), 59 to 79 (FLPP…ITGG), 114 to 134 (GTIA…SLVL), 137 to 157 (YSIA…FLCL), 170 to 190 (IFIG…VLAL), and 199 to 219 (ATII…LLCL).

This sequence belongs to the CobS family. Mg(2+) serves as cofactor.

It localises to the cell membrane. The catalysed reaction is alpha-ribazole + adenosylcob(III)inamide-GDP = adenosylcob(III)alamin + GMP + H(+). The enzyme catalyses alpha-ribazole 5'-phosphate + adenosylcob(III)inamide-GDP = adenosylcob(III)alamin 5'-phosphate + GMP + H(+). Its pathway is cofactor biosynthesis; adenosylcobalamin biosynthesis; adenosylcobalamin from cob(II)yrinate a,c-diamide: step 7/7. Joins adenosylcobinamide-GDP and alpha-ribazole to generate adenosylcobalamin (Ado-cobalamin). Also synthesizes adenosylcobalamin 5'-phosphate from adenosylcobinamide-GDP and alpha-ribazole 5'-phosphate. This is Adenosylcobinamide-GDP ribazoletransferase from Clostridium botulinum (strain Okra / Type B1).